Consider the following 1391-residue polypeptide: DNA-directed RNA polymerase subunit beta (1391 aa).

This sequence belongs to the RNA polymerase beta chain family. As to quaternary structure, the RNAP catalytic core consists of 2 alpha, 1 beta, 1 beta' and 1 omega subunit. When a sigma factor is associated with the core the holoenzyme is formed, which can initiate transcription.

It catalyses the reaction RNA(n) + a ribonucleoside 5'-triphosphate = RNA(n+1) + diphosphate. Functionally, DNA-dependent RNA polymerase catalyzes the transcription of DNA into RNA using the four ribonucleoside triphosphates as substrates. The sequence is that of DNA-directed RNA polymerase subunit beta from Granulibacter bethesdensis (strain ATCC BAA-1260 / CGDNIH1).